A 540-amino-acid chain; its full sequence is Pentatricopeptide repeat-containing protein At3g29290 (540 aa).

PPR repeat units lie at residues 106 to 140 (NEETLSKRLRKLSRLDKVRSALELFDSMRFLGLQP), 141 to 175 (NAHACNSFLSCLLRNGDIQKAFTVFEFMRKKENVT), 177 to 205 (HTYSLMLKAVAEVKGCESALRMFRELERE), 213 to 247 (DVVLYNTAISLCGRINNVYETERIWRVMKGDGHIG), 248 to 282 (TEITYSLLVSIFVRCGRSELALDVYDEMVNNKISL), 283 to 317 (REDAMYAMISACTKEEKWDLALKIFQSMLKKGMKP), 318 to 352 (NLVACNTLINSLGKAGKVGLVFKVYSVLKSLGHKP), 353 to 387 (DEYTWNALLTALYKANRYEDVLQLFDMIRSENLCC), 389 to 423 (NEYLYNTAMVSCQKLGYWEKAVKLLYEMEGSGLTV), 424 to 458 (STSSYNLVISACEKSRKSKVALLVYEHMAQRDCKP), 459 to 487 (NTFTYLSLVRSCIWGSLWDEVEDILKKVE), and 489 to 523 (DVSLYNAAIHGMCLRREFKFAKELYVKMREMGLEP).

It belongs to the PPR family. P subfamily.

This is Pentatricopeptide repeat-containing protein At3g29290 (EMB2076) from Arabidopsis thaliana (Mouse-ear cress).